The primary structure comprises 339 residues: Heat-inducible transcription repressor HrcA (339 aa).

Belongs to the HrcA family.

Its function is as follows. Negative regulator of class I heat shock genes (grpE-dnaK-dnaJ and groELS operons). Prevents heat-shock induction of these operons. In Paraburkholderia phytofirmans (strain DSM 17436 / LMG 22146 / PsJN) (Burkholderia phytofirmans), this protein is Heat-inducible transcription repressor HrcA.